The following is a 268-amino-acid chain: MAISHNTLAFTFGMLGNVISFLVFLAPISTFYRIYKKKSTEGFQSLPYLVALFSSMLWLYYALLKKDAFLLITINSFGCVVETIYIILYIIYAPRDARNLTFKLLSAMNVGSFALILIVTNYAVHGPLRVQVLGWVCVSLSVSVFAAPLSIVAQVVRTKSVEFMPFNLSFTLTLSATMWFGYGFFLKDICIXLPNVLGXVLGLLQMLLYAIYRNGGEKAMKKEKKAPIEPPKSIVIETQLEKIEQEKKNKDDDNEEKDKSEEPIGCGV.

Residues 1-7 are Extracellular-facing; it reads MAISHNT. A helical membrane pass occupies residues 8–28; that stretch reads LAFTFGMLGNVISFLVFLAPI. Residues 10–96 enclose the MtN3/slv 1 domain; the sequence is FTFGMLGNVI…ILYIIYAPRD (87 aa). Topologically, residues 29–42 are cytoplasmic; it reads STFYRIYKKKSTEG. A helical membrane pass occupies residues 43–63; that stretch reads FQSLPYLVALFSSMLWLYYAL. Residues 64–70 are Extracellular-facing; the sequence is LKKDAFL. The chain crosses the membrane as a helical span at residues 71 to 91; it reads LITINSFGCVVETIYIILYII. The Cytoplasmic portion of the chain corresponds to 92–103; it reads YAPRDARNLTFK. Residues 104-124 form a helical membrane-spanning segment; sequence LLSAMNVGSFALILIVTNYAV. The Extracellular portion of the chain corresponds to 125–131; sequence HGPLRVQ. The MtN3/slv 2 domain occupies 131–214; sequence QVLGWVCVSL…QMLLYAIYRN (84 aa). A helical membrane pass occupies residues 132–152; that stretch reads VLGWVCVSLSVSVFAAPLSIV. Over 153-165 the chain is Cytoplasmic; it reads AQVVRTKSVEFMP. The helical transmembrane segment at 166–186 threads the bilayer; that stretch reads FNLSFTLTLSATMWFGYGFFL. Residues 187 to 190 lie on the Extracellular side of the membrane; that stretch reads KDIC. The chain crosses the membrane as a helical span at residues 191–211; it reads IXLPNVLGXVLGLLQMLLYAI. Residues 212–268 lie on the Cytoplasmic side of the membrane; sequence YRNGGEKAMKKEKKAPIEPPKSIVIETQLEKIEQEKKNKDDDNEEKDKSEEPIGCGV. Positions 234–262 form a coiled coil; it reads IVIETQLEKIEQEKKNKDDDNEEKDKSEE. Residues 243 to 262 are compositionally biased toward basic and acidic residues; the sequence is IEQEKKNKDDDNEEKDKSEE. The segment at 243–268 is disordered; sequence IEQEKKNKDDDNEEKDKSEEPIGCGV.

Belongs to the SWEET sugar transporter family. Forms homooligomers and/or heterooligomers.

The protein localises to the cell membrane. Functionally, mediates both low-affinity uptake and efflux of sugar across the plasma membrane. The sequence is that of Bidirectional sugar transporter N3 (N3) from Medicago truncatula (Barrel medic).